A 176-amino-acid polypeptide reads, in one-letter code: Cytochrome b (176 aa).

3 helical membrane passes run 33 to 53 (FGSL…FLAM), 77 to 98 (WVLR…YLHV), and 113 to 133 (WNMG…GYVL). Residues His-83 and His-97 each contribute to the heme b site.

Belongs to the cytochrome b family. The cytochrome bc1 complex contains 11 subunits: 3 respiratory subunits (MT-CYB, CYC1 and UQCRFS1), 2 core proteins (UQCRC1 and UQCRC2) and 6 low-molecular weight proteins (UQCRH/QCR6, UQCRB/QCR7, UQCRQ/QCR8, UQCR10/QCR9, UQCR11/QCR10 and a cleavage product of UQCRFS1). This cytochrome bc1 complex then forms a dimer. It depends on heme b as a cofactor.

It localises to the mitochondrion inner membrane. Component of the ubiquinol-cytochrome c reductase complex (complex III or cytochrome b-c1 complex) that is part of the mitochondrial respiratory chain. The b-c1 complex mediates electron transfer from ubiquinol to cytochrome c. Contributes to the generation of a proton gradient across the mitochondrial membrane that is then used for ATP synthesis. This is Cytochrome b (MT-CYB) from Lasionycteris noctivagans (Silver-haired bat).